The chain runs to 432 residues: Ectonucleoside triphosphate diphosphohydrolase 5 (432 aa).

A signal peptide spans 1–24 (MALYQGAAFFMLVASCVCSTVFHR). Glu175 functions as the Proton acceptor in the catalytic mechanism. A glycan (N-linked (GlcNAc...) asparagine) is linked at Asn235. 2 cysteine pairs are disulfide-bonded: Cys275/Cys307 and Cys367/Cys381. N-linked (GlcNAc...) asparagine glycosylation occurs at Asn372.

Belongs to the GDA1/CD39 NTPase family. In terms of assembly, monomer; active form. Homodimer; disulfide-linked. Homodimers are enzymatically inactive. Ca(2+) serves as cofactor. The cofactor is Mg(2+). In terms of processing, N-glycosylated; high-mannose type.

Its subcellular location is the endoplasmic reticulum. It localises to the secreted. It carries out the reaction a ribonucleoside 5'-diphosphate + H2O = a ribonucleoside 5'-phosphate + phosphate + H(+). It catalyses the reaction GDP + H2O = GMP + phosphate + H(+). The enzyme catalyses UDP + H2O = UMP + phosphate + H(+). The catalysed reaction is IDP + H2O = IMP + phosphate + H(+). It carries out the reaction CDP + H2O = CMP + phosphate + H(+). It catalyses the reaction ADP + H2O = AMP + phosphate + H(+). Its pathway is protein modification; protein glycosylation. Its function is as follows. Hydrolyzes nucleoside diphosphates with a preference for GDP, IDP and UDP compared to ADP and CDP. In the lumen of the endoplasmic reticulum, hydrolyzes UDP that acts as an end-product feedback inhibitor of the UDP-Glc:glycoprotein glucosyltransferases. UMP can be transported back by an UDP-sugar antiporter to the cytosol where it is consumed to regenerate UDP-glucose. Therefore, it positively regulates protein reglucosylation by clearing UDP from the ER lumen and by promoting the regeneration of UDP-glucose. Protein reglucosylation is essential to proper glycoprotein folding and quality control in the ER. This Bos taurus (Bovine) protein is Ectonucleoside triphosphate diphosphohydrolase 5 (ENTPD5).